A 546-amino-acid polypeptide reads, in one-letter code: CTP synthase (546 aa).

An amidoligase domain region spans residues 1–266; it reads MTTNYIFVTG…DDLVCQRFGI (266 aa). Residue Ser-14 participates in CTP binding. UTP is bound at residue Ser-14. Residues 15 to 20 and Asp-72 contribute to the ATP site; that span reads SLGKGI. Residues Asp-72 and Glu-140 each coordinate Mg(2+). CTP is bound by residues 147-149, 187-192, and Lys-223; these read DIE and KTKPTQ. Residues 187 to 192 and Lys-223 contribute to the UTP site; that span reads KTKPTQ. 239-241 contacts ATP; that stretch reads KDV. The region spanning 291 to 542 is the Glutamine amidotransferase type-1 domain; sequence VIGMVGKYIE…VKAAGESVRG (252 aa). Position 352 (Gly-352) interacts with L-glutamine. The active-site Nucleophile; for glutamine hydrolysis is Cys-379. L-glutamine-binding positions include 380-383, Glu-403, and Arg-470; that span reads LGMQ. Residues His-515 and Glu-517 contribute to the active site.

The protein belongs to the CTP synthase family. As to quaternary structure, homotetramer.

It carries out the reaction UTP + L-glutamine + ATP + H2O = CTP + L-glutamate + ADP + phosphate + 2 H(+). The catalysed reaction is L-glutamine + H2O = L-glutamate + NH4(+). The enzyme catalyses UTP + NH4(+) + ATP = CTP + ADP + phosphate + 2 H(+). The protein operates within pyrimidine metabolism; CTP biosynthesis via de novo pathway; CTP from UDP: step 2/2. Allosterically activated by GTP, when glutamine is the substrate; GTP has no effect on the reaction when ammonia is the substrate. The allosteric effector GTP functions by stabilizing the protein conformation that binds the tetrahedral intermediate(s) formed during glutamine hydrolysis. Inhibited by the product CTP, via allosteric rather than competitive inhibition. Functionally, catalyzes the ATP-dependent amination of UTP to CTP with either L-glutamine or ammonia as the source of nitrogen. Regulates intracellular CTP levels through interactions with the four ribonucleotide triphosphates. This Aliivibrio fischeri (strain MJ11) (Vibrio fischeri) protein is CTP synthase.